A 638-amino-acid polypeptide reads, in one-letter code: Sodium- and chloride-dependent glycine transporter 1 (638 aa).

Positions 1 to 29 are disordered; it reads MAAAQGPVAPSSLEQNGAVPSEATKKDQN. Residues 1 to 40 lie on the Cytoplasmic side of the membrane; that stretch reads MAAAQGPVAPSSLEQNGAVPSEATKKDQNLKRGNWGNQIE. The next 3 membrane-spanning stretches (helical) occupy residues 41 to 61, 69 to 88, and 112 to 132; these read FVLT…FPYL, AFMF…LFFM, and GVGY…NVVI. Residues 133-219 lie on the Extracellular side of the membrane; the sequence is CIAFYYFFSS…DDIGNFGEVR (87 aa). 4 N-linked (GlcNAc...) asparagine glycosylation sites follow: asparagine 169, asparagine 172, asparagine 182, and asparagine 188. 9 consecutive transmembrane segments (helical) span residues 220-238, 247-264, 300-317, 329-350, 383-402, 431-449, 465-485, 506-525, and 544-562; these read LPLL…LCLI, VVYF…ILFI, IFYS…MASY, VIIS…FSIL, LPIS…LLGL, YVTL…PLTS, SFSL…IYGH, ICWR…FSVI, and IGFL…YALF. At 563–638 the chain is on the cytoplasmic side; that stretch reads QFCRTDGDTL…GSSRFQDSRI (76 aa). The tract at residues 597–638 is disordered; it reads RYAPTTTPSPEDGLEVQPLHPDKAQIPMVGSNGSSRFQDSRI. At threonine 603 the chain carries Phosphothreonine. Residues serine 605 and serine 630 each carry the phosphoserine modification. The tract at residues 627–638 is essential for interaction with EXOC1; that stretch reads SNGSSRFQDSRI. Polar residues predominate over residues 627-638; sequence SNGSSRFQDSRI.

This sequence belongs to the sodium:neurotransmitter symporter (SNF) (TC 2.A.22) family. SLC6A9 subfamily. In terms of assembly, interacts with EXOC1; interaction increases the transporter capacity of SLC6A9 probably by promoting its insertion into the cell membrane. Interacts with EXOC3 and EXOC4.

The protein resides in the cell membrane. The catalysed reaction is glycine(out) + chloride(out) + 2 Na(+)(out) = glycine(in) + chloride(in) + 2 Na(+)(in). Its function is as follows. Sodium- and chloride-dependent glycine transporter which is essential for regulating glycine concentrations at inhibitory glycinergic synapses. The sequence is that of Sodium- and chloride-dependent glycine transporter 1 (SLC6A9) from Bos taurus (Bovine).